A 310-amino-acid polypeptide reads, in one-letter code: Tyrosine recombinase XerC (310 aa).

The Core-binding (CB) domain occupies 22 to 103 (SQMLEAIEDF…SVKSFSTWAV (82 aa)). A Tyr recombinase domain is found at 124 to 304 (NLPRVLGEVQ…SSQRLLEAFR (181 aa)). Active-site residues include R165, K189, H256, R259, and H282. Residue Y291 is the O-(3'-phospho-DNA)-tyrosine intermediate of the active site.

This sequence belongs to the 'phage' integrase family. XerC subfamily. In terms of assembly, forms a cyclic heterotetrameric complex composed of two molecules of XerC and two molecules of XerD.

The protein localises to the cytoplasm. Site-specific tyrosine recombinase, which acts by catalyzing the cutting and rejoining of the recombining DNA molecules. The XerC-XerD complex is essential to convert dimers of the bacterial chromosome into monomers to permit their segregation at cell division. It also contributes to the segregational stability of plasmids. This Corynebacterium efficiens (strain DSM 44549 / YS-314 / AJ 12310 / JCM 11189 / NBRC 100395) protein is Tyrosine recombinase XerC.